The primary structure comprises 38 residues: Photosystem II reaction center protein L (38 aa).

The helical transmembrane segment at 17–37 (SLFWGLLLIFVLAILFSNYFF) threads the bilayer.

This sequence belongs to the PsbL family. In terms of assembly, PSII is composed of 1 copy each of membrane proteins PsbA, PsbB, PsbC, PsbD, PsbE, PsbF, PsbH, PsbI, PsbJ, PsbK, PsbL, PsbM, PsbT, PsbX, PsbY, PsbZ, Psb30/Ycf12, at least 3 peripheral proteins of the oxygen-evolving complex and a large number of cofactors. It forms dimeric complexes.

The protein resides in the plastid. Its subcellular location is the chloroplast thylakoid membrane. In terms of biological role, one of the components of the core complex of photosystem II (PSII). PSII is a light-driven water:plastoquinone oxidoreductase that uses light energy to abstract electrons from H(2)O, generating O(2) and a proton gradient subsequently used for ATP formation. It consists of a core antenna complex that captures photons, and an electron transfer chain that converts photonic excitation into a charge separation. This subunit is found at the monomer-monomer interface and is required for correct PSII assembly and/or dimerization. The chain is Photosystem II reaction center protein L from Chara vulgaris (Common stonewort).